We begin with the raw amino-acid sequence, 317 residues long: Protein-L-isoaspartate O-methyltransferase (317 aa).

Serine 59 is an active-site residue.

The protein belongs to the methyltransferase superfamily. L-isoaspartyl/D-aspartyl protein methyltransferase family. Monomer.

It is found in the cytoplasm. It catalyses the reaction [protein]-L-isoaspartate + S-adenosyl-L-methionine = [protein]-L-isoaspartate alpha-methyl ester + S-adenosyl-L-homocysteine. Catalyzes the methyl esterification of L-isoaspartyl residues in peptides and proteins that result from spontaneous decomposition of normal L-aspartyl and L-asparaginyl residues. It plays a role in the repair and/or degradation of damaged proteins. This chain is Protein-L-isoaspartate O-methyltransferase (pcm), found in Thermotoga maritima (strain ATCC 43589 / DSM 3109 / JCM 10099 / NBRC 100826 / MSB8).